Reading from the N-terminus, the 92-residue chain is uncharacterized protein (92 aa).

Its function is as follows. Homolog of shope fibroma virus T4A ORF. This is an uncharacterized protein from Swinepox virus (strain Kasza) (SWPV).